The primary structure comprises 598 residues: Urease subunit alpha (598 aa).

The Ni(2+) site is built by His-141, His-143, and Lys-223. The residue at position 223 (Lys-223) is an N6-carboxylysine. A substrate-binding site is contributed by His-225. Ni(2+)-binding residues include His-252 and His-278. The active-site Proton donor is His-326. Asp-366 contributes to the Ni(2+) binding site.

It belongs to the metallo-dependent hydrolases superfamily. Urease alpha subunit family. In terms of assembly, heterotrimer of UreA (gamma), UreB (beta) and UreC (alpha) subunits. Three heterotrimers associate to form the active enzyme. Ni cation serves as cofactor. Carboxylation allows a single lysine to coordinate two nickel ions.

It localises to the cytoplasm. The catalysed reaction is urea + 2 H2O + H(+) = hydrogencarbonate + 2 NH4(+). It participates in nitrogen metabolism; urea degradation; CO(2) and NH(3) from urea (urease route): step 1/1. This Ureaplasma parvum serovar 3 (strain ATCC 27815 / 27 / NCTC 11736) protein is Urease subunit alpha.